We begin with the raw amino-acid sequence, 287 residues long: Damage-control phosphatase PH1575 (287 aa).

The Subfamily I CxxC motif signature appears at 7–10 (CLTC). Positions 156, 157, and 191 each coordinate Mn(2+). The Subfamily I GNFE motif motif lies at 243-246 (GNFE). The Subfamily I KC motif motif lies at 263-264 (KC).

The protein belongs to the damage-control phosphatase family. Nucleotides phosphatase I subfamily. It depends on Mn(2+) as a cofactor. The cofactor is Ni(2+). [2Fe-2S] cluster is required as a cofactor.

Its activity is regulated as follows. Activity is strongly promoted by Co(2+), Ni(2+), Mg(2+), Mn(2+), Ca(2+), Zn(2+) and Cu(2+). Activity is inhibited by EDTA. Its function is as follows. Metal-dependent phosphatase with probable damage-control functions. Shows phosphatase activity against p-nitrophenyl phosphate (pNPP), but natural substrates have not been identified yet. Low phosphatase activity against 8-oxo nucleotides suggests that it could hydrolyze oxidatively damaged purine nucleotides or their biosynthetic intermediates. This is Damage-control phosphatase PH1575 from Pyrococcus horikoshii (strain ATCC 700860 / DSM 12428 / JCM 9974 / NBRC 100139 / OT-3).